The following is a 120-amino-acid chain: Large ribosomal subunit protein uL18 (120 aa).

This sequence belongs to the universal ribosomal protein uL18 family. Part of the 50S ribosomal subunit; part of the 5S rRNA/L5/L18/L25 subcomplex. Contacts the 5S and 23S rRNAs.

Its function is as follows. This is one of the proteins that bind and probably mediate the attachment of the 5S RNA into the large ribosomal subunit, where it forms part of the central protuberance. The sequence is that of Large ribosomal subunit protein uL18 from Rhodopseudomonas palustris (strain BisB18).